Here is a 1454-residue protein sequence, read N- to C-terminus: MGSLGGLALCLLRLLLLGLQRPPLPGAGAQSAAGGCSFDEHYSNCGYSVALGTNGFTWEQINTWEKPMLDPAVPTGSFMMVNSSGRASGQKAHLLLPTLKENDTHCIDFHYYFSSRDRSSPGALNVYVKVNGGPQGNPVWNVSGVVTEGWVKAELAISTFWPHFYQVIFESVSLKGHPGYIAVDEVRVLAHPCRKAPHFLRLQNVEVNVGQNATFQCIAGGKWSQHDKLWLQQWNGRDTALMVTRVVNHRRFSATVSVADTSQRSISKYRCVIRSDGGSGVSNYAELIVKEPPTPIAPPELLAVGATYLWIKPNANSIIGDGPIILKEVEYRTTTGTWAETHIVDSPNYKLWHLDPDVEYEIRVLLTRPGEGGTGPPGPPLTTRTKCADPVHGPQNVEIVDIRARQLTLQWEPFGYAVTRCHSYNLTVQYQYVFNQQQYEAEEVIQTSSHYTLRGLRPFMTIRLRLLLSNPEGRMESEELVVQTEEDVPGAVPLESIQGGPFEEKIYIQWKPPNETNGVITLYEINYKAVGSLDPSADLSSQRGKVFKLRNETHHLFVGLYPGTTYSFTIKASTAKGFGPPVTTRIATKISAPSMPEYDADTPLNETDTTITVMLKPAQSRGAPVSVYQLVVKEERLQKSRRAADIIECFSVPVSYRNASNLDSLHYFAAELKPSNLPVTQPFTVGDNKTYNGYWNPPLSPLKSYSIYFQALSKANGETKINCVRLATKGAPMGSAQVTPGTPLCLLTTASTQNSNTVEPEKQVDNTVKMAGVIAGLLMFIIILLGVMLTIKRRKLAKKQKETQSGAQREMGPVASTDKPTAKLGTNRNDEGFSSSSQDVNGFTDGSRGELSQPTLTIQTHPYRTCDPVEMSYPRDQFQPAIRVADLLQHITQMKRGQGYGFKEEYEALPEGQTASWDTAKEDENRNKNRYGNIISYDHSRVRLLVLDGDPHSDYINANYIDGYHRPRHYIATQGPMQETVKDFWRMIWQENSASIVMVTNLVEVGRVKCVRYWPDDTEVYGDIKVTLIETEPLAEYVIRTFTVQKKGYHEIRELRLFHFTSWPDHGVPCYATGLLGFVRQVKFLNPPEAGPIVVHCSAGAGRTGCFIAIDTMLDMAENEGVVDIFNCVRELRAQRVNLVQTEEQYVFVHDAILEACLCGNTAIPVCEFRSLYYNISRLDPQTNSSQIKDEFQTLNIVTPRVRPEDCSIGLLPRNHDKNRSMDVLPLDRCLPFLISVDGESSNYINAALMDSHKQPAAFVVTQHPLPNTVADFWRLVFDYNCSSVVMLNEMDTAQLCMQYWPEKTSGCYGPIQVEFVSADIDEDIIHRIFRICNMARPQDGYRIVQHLQYIGWPAYRDTPPSKRSLLKVVRRLEKWQEQYDGREGRTVVHCLNGGGRSGTFCAICSVCEMIQQQNIIDVFHIVKTLRNNKSNMVETLEQYKFVYEVALEYLSSF.

Residues 1–29 (MGSLGGLALCLLRLLLLGLQRPPLPGAGA) form the signal peptide. The Extracellular portion of the chain corresponds to 30–770 (QSAAGGCSFD…EKQVDNTVKM (741 aa)). The 162-residue stretch at 34-195 (GGCSFDEHYS…VRVLAHPCRK (162 aa)) folds into the MAM domain. Residues Asn-82, Asn-102, Asn-141, and Asn-212 are each glycosylated (N-linked (GlcNAc...) asparagine). One can recognise an Ig-like C2-type domain in the interval 197–288 (PHFLRLQNVE…SGVSNYAELI (92 aa)). Cys-217 and Cys-271 form a disulfide bridge. 3 Fibronectin type-III domains span residues 295-388 (PIAP…TKCA), 393-487 (GPQN…TEED), and 488-594 (VPGA…SAPS). N-linked (GlcNAc...) asparagine glycosylation is found at Asn-425, Asn-514, Asn-551, Asn-605, Asn-658, and Asn-688. Residues 670 to 767 (AELKPSNLPV…VEPEKQVDNT (98 aa)) enclose the Fibronectin type-III 4 domain. The helical transmembrane segment at 771-791 (AGVIAGLLMFIIILLGVMLTI) threads the bilayer. Residues 792–1454 (KRRKLAKKQK…EVALEYLSSF (663 aa)) lie on the Cytoplasmic side of the membrane. The tract at residues 800-852 (QKETQSGAQREMGPVASTDKPTAKLGTNRNDEGFSSSSQDVNGFTDGSRGELS) is disordered. The span at 824–841 (LGTNRNDEGFSSSSQDVN) shows a compositional bias: polar residues. Tyrosine-protein phosphatase domains are found at residues 902–1156 (FKEE…ILEA) and 1188–1450 (IKDE…ALEY). Residues Asp-1065, 1097-1103 (CSAGAGR), and Gln-1141 each bind substrate. The active-site Phosphocysteine intermediate is the Cys-1097. Ser-1221 is subject to Phosphoserine. Cys-1391 (phosphocysteine intermediate) is an active-site residue.

It belongs to the protein-tyrosine phosphatase family. Receptor class 2B subfamily. As to expression, expression is restricted to the CNS. Distributed throughout the brain and spinal cord.

The protein resides in the membrane. The enzyme catalyses O-phospho-L-tyrosyl-[protein] + H2O = L-tyrosyl-[protein] + phosphate. Its function is as follows. May be involved in both signal transduction and cellular adhesion in the CNS. May have specific signaling roles in the tyrosine phosphorylation/dephosphorylation pathway in the anterior compartment of the adult cerebellar cortex. The sequence is that of Receptor-type tyrosine-protein phosphatase T (Ptprt) from Mus musculus (Mouse).